The following is a 136-amino-acid chain: Large ribosomal subunit protein uL16 (136 aa).

This sequence belongs to the universal ribosomal protein uL16 family. Part of the 50S ribosomal subunit.

Its function is as follows. Binds 23S rRNA and is also seen to make contacts with the A and possibly P site tRNAs. This chain is Large ribosomal subunit protein uL16, found in Glaesserella parasuis serovar 5 (strain SH0165) (Haemophilus parasuis).